The following is an 818-amino-acid chain: Adhesion G protein-coupled receptor E5 (818 aa).

The N-terminal stretch at M1–T23 is a signal peptide. Over Q24–T533 the chain is Extracellular. One can recognise an EGF-like 1 domain in the interval E27–E68. Intrachain disulfides connect C31–C41, C35–C47, C49–C67, C73–C86, C80–C95, C97–C118, C169–C182, C176–C191, C193–C212, C218–C231, C225–C240, and C242–C260. N44 is a glycosylation site (N-linked (GlcNAc...) asparagine). An EGF-like 2; calcium-binding domain is found at D69 to Q119. Residue N112 is glycosylated (N-linked (GlcNAc...) asparagine). In terms of domain architecture, EGF-like 3; calcium-binding spans D165–E213. In terms of domain architecture, EGF-like 4; calcium-binding spans D214–Q261. N227 carries an N-linked (GlcNAc...) asparagine glycan. 2 N-linked (GlcNAc...) asparagine glycosylation sites follow: N299 and N395. The GAIN-B domain occupies P347–Q525. At S425 the chain carries Phosphoserine. N-linked (GlcNAc...) asparagine glycosylation is found at N461 and N502. 2 disulfides stabilise this stretch: C482–C507 and C499–C509. A GPS region spans residues C482–Q525. The helical transmembrane segment at K534–V554 threads the bilayer. At K555 to T562 the chain is on the cytoplasmic side. A helical transmembrane segment spans residues M563–V583. Residues E584–H602 lie on the Extracellular side of the membrane. The helical transmembrane segment at F603–V623 threads the bilayer. Residues V624 to R637 lie on the Cytoplasmic side of the membrane. Residues C638–M658 form a helical membrane-spanning segment. At D659–S679 the chain is on the extracellular side. Residues F680–W700 traverse the membrane as a helical segment. Residues K701–T723 lie on the Cytoplasmic side of the membrane. Residues I724–F744 traverse the membrane as a helical segment. The Extracellular portion of the chain corresponds to N745–S752. The helical transmembrane segment at Y753 to L773 threads the bilayer. Topologically, residues N774 to M818 are cytoplasmic. Phosphoserine is present on S798. Low complexity predominate over residues S799 to T808. A disordered region spans residues S799–M818. T808 carries the post-translational modification Phosphothreonine. Residues R809–M818 are compositionally biased toward polar residues. Phosphoserine occurs at positions 814 and 816.

Belongs to the G-protein coupled receptor 2 family. LN-TM7 subfamily. Forms a heterodimer, consisting of a large extracellular region (alpha subunit) non-covalently linked to a seven-transmembrane moiety (beta subunit). Interacts with complement decay-accelerating factor (DAF). The largest isoform (isoform 1) do not interact with DAF. Also interacts with chondroitin sulfate. Proteolytically cleaved into 2 subunits, an extracellular alpha subunit and a seven-transmembrane subunit. As to expression, although predominantly expressed by cells of the immune system, expressed ubiquitously with particularly high levels of expression in the lung and the thymus gland. In the spleen, expression is detected on most myeloid cells and variable portions of T-cells, B-cells and NK cells. In the bone marrow, expressed in nearly all myeloid cells, whereas little if any expression is found on erythroid cells.

Its subcellular location is the cell membrane. It is found in the secreted. The protein localises to the extracellular space. In terms of biological role, receptor potentially involved in both adhesion and signaling processes early after leukocyte activation. Plays an essential role in leukocyte migration. The polypeptide is Adhesion G protein-coupled receptor E5 (Mus musculus (Mouse)).